The primary structure comprises 628 residues: Forkhead box protein O (628 aa).

Threonine 50 carries the post-translational modification Phosphothreonine; by PKB/AKT1. Residue serine 81 is modified to Phosphoserine. The fork-head DNA-binding region spans 101–207 (WGNLSYADLI…ETSRYEKRRG (107 aa)). 2 disordered regions span residues 188-210 (KSVR…GRAK) and 223-270 (GLND…SSCG). Serine 196 carries the phosphoserine; by PKB/AKT1 modification. Composition is skewed to polar residues over residues 227–236 (ATPSPSSSVS) and 261–270 (RASSNASSCG). Residue serine 264 is modified to Phosphoserine; by PKB/AKT1. 3 positions are modified to phosphoserine: serine 267, serine 268, and serine 273. Disordered stretches follow at residues 327–373 (SAAS…SLQP) and 398–451 (NSVT…QQQQ). The span at 334–343 (TQPPPPPYPA) shows a compositional bias: pro residues. Residues 344–359 (PQQQQQQQPQQQQAYT) show a composition bias toward low complexity. Positions 411-423 (SEPSSDSLNTYSN) are enriched in polar residues. The segment covering 438–451 (QQQRQQQQQQQQQQ) has biased composition (low complexity).

As to quaternary structure, interacts with melt.

The protein localises to the cytoplasm. Its subcellular location is the nucleus. Functionally, transcription factor involved in the regulation of the insulin signaling pathway. Consistently activates both the downstream target Thor\d4EBP and the feedback control target InR. Involved in negative regulation of the cell cycle, modulating cell growth and proliferation. In response to cellular stresses, such as nutrient deprivation or increased levels of reactive oxygen species, foxo is activated and inhibits growth through the action of target genes such as Thor. Foxo activated in the adult fat body can regulate lifespan in adults; an insulin peptide itself may function as one secondary messenger of insulin-regulated aging. Also regulates Lip4, homolog of human acid lipases, thereby acting as a key modulator of lipid metabolism by insulin signaling and integrates insulin responses to glucose and lipid homeostasis. This chain is Forkhead box protein O, found in Drosophila willistoni (Fruit fly).